We begin with the raw amino-acid sequence, 316 residues long: Insulin-like growth factor-binding protein 2 (316 aa).

A signal peptide spans 1 to 29 (MLPRLGGTALSLLPLLLLLLGTGGRGARA). The IGFBP N-terminal domain maps to 31-126 (VLFRCPPCTP…VLGEGTCEKR (96 aa)). 6 disulfide bridges follow: cysteine 35–cysteine 76, cysteine 38–cysteine 78, cysteine 46–cysteine 79, cysteine 68–cysteine 82, cysteine 90–cysteine 103, and cysteine 97–cysteine 123. The segment at 189–217 (QHRQMGKGGKHHLGLEEPKKLRPPPARTP) is disordered. The Thyroglobulin type-1 domain maps to 215 to 297 (RTPCQQELDQ…APTIRGDPEC (83 aa)). 3 disulfides stabilise this stretch: cysteine 218/cysteine 252, cysteine 263/cysteine 274, and cysteine 276/cysteine 297. Residues 292–294 (RGD) carry the Cell attachment site motif.

As to quaternary structure, interacts with IGF1. Interacts with IGF2. Interacts (via RGD motif) with integrin alpha5/ITGA5; this interaction induces cell migration, adhesion or apoptosis according to the context. Interacts with PTPRB; this interaction leads to PTPRB dimerization and inactivation. Cleaved by MMP9 leading to release of free IGF2 from IGFBP2-IGF2 complex, which contributes to enhance the motility and the growth of astrocytes. In terms of processing, O-glycosylated.

It is found in the secreted. Its function is as follows. May have both growth-inhibiting and growth-promoting effects, depending on tissue type; increases IGF-induced DNA synthesis in the uterine epithelium. IGF-binding proteins prolong the half-life of the IGFs and have been shown to either inhibit or stimulate the growth promoting effects of the IGFs on cell culture. They alter the interaction of IGFs with their cell surface receptors. Functionally, multifunctional protein that plays a critical role in regulating the availability of IGFs such as IGF1 and IGF2 to their receptors and thereby regulates IGF-mediated cellular processes including proliferation, differentiation, and apoptosis in a cell-type specific manner. Functions coordinately with receptor protein tyrosine phosphatase beta/PTPRB and the IGF1 receptor to regulate IGF1-mediated signaling by stimulating the phosphorylation of PTEN leading to its inactivation and AKT1 activation. Plays a positive role in cell migration via interaction with integrin alpha5/ITGA5 through an RGD motif. Additionally, interaction with ITGA5/ITGB1 enhances the adhesion of endothelial progenitor cells to endothelial cells. Upon mitochondrial damage, facilitates apoptosis with ITGA5 of podocytes, and then activates the phosphorylation of focal adhesion kinase (FAK)-mediated mitochondrial injury. The polypeptide is Insulin-like growth factor-binding protein 2 (IGFBP2) (Sus scrofa (Pig)).